We begin with the raw amino-acid sequence, 223 residues long: Adenylate kinase 4, mitochondrial (223 aa).

15-20 (GSGKGT) contributes to the a ribonucleoside 5'-triphosphate binding site. The segment at 35–64 (SSGHFLRENIKANTEVGEMAKQYIEKSLLV) is NMP. AMP contacts are provided by serine 36 and arginine 41. Lysine 60 is modified (N6-succinyllysine). Residues 62-64 (LLV), 89-92 (GFPR), and glutamine 96 each bind AMP. The segment at 125–162 (RRWIHPPSGRVYNLDFNPPHVHGIDDVTGEPLVQQEDD) is LID. Residues arginine 126 and 135–136 (VY) contribute to the a ribonucleoside 5'-triphosphate site. Position 170 (arginine 170) interacts with AMP. Residue lysine 175 is modified to N6-acetyllysine. N6-acetyllysine; alternate occurs at positions 179 and 186. Residues lysine 179 and lysine 186 each carry the N6-succinyllysine; alternate modification. Threonine 199 serves as a coordination point for a ribonucleoside 5'-triphosphate.

The protein belongs to the adenylate kinase family. AK3 subfamily. In terms of assembly, monomer. Interacts with SLC25A5/ANT2.

It localises to the mitochondrion matrix. The catalysed reaction is a ribonucleoside 5'-phosphate + ATP = a ribonucleoside 5'-diphosphate + ADP. It catalyses the reaction AMP + ATP = 2 ADP. The enzyme catalyses GTP + AMP = GDP + ADP. It carries out the reaction CMP + ATP = CDP + ADP. The catalysed reaction is GTP + CMP = CDP + GDP. It catalyses the reaction dAMP + ATP = dADP + ADP. The enzyme catalyses dCMP + ATP = dCDP + ADP. It carries out the reaction a 2'-deoxyribonucleoside 5'-diphosphate + ATP = a 2'-deoxyribonucleoside 5'-triphosphate + ADP. The catalysed reaction is a ribonucleoside 5'-diphosphate + ATP = a ribonucleoside 5'-triphosphate + ADP. It catalyses the reaction GDP + ATP = GTP + ADP. The enzyme catalyses CDP + GTP = CTP + GDP. It carries out the reaction CDP + ATP = CTP + ADP. The catalysed reaction is UDP + ATP = UTP + ADP. It catalyses the reaction GTP + UDP = UTP + GDP. The enzyme catalyses dADP + GTP = dATP + GDP. It carries out the reaction dCDP + GTP = dCTP + GDP. The catalysed reaction is dCDP + ATP = dCTP + ADP. It catalyses the reaction dGDP + ATP = dGTP + ADP. The enzyme catalyses dTDP + GTP = dTTP + GDP. It carries out the reaction dTDP + ATP = dTTP + ADP. Broad-specificity mitochondrial nucleoside phosphate kinase involved in cellular nucleotide homeostasis by catalyzing nucleoside-phosphate interconversions. Similar to other adenylate kinases, preferentially catalyzes the phosphorylation of the nucleoside monophosphate AMP with ATP as phosphate donor to produce ADP. Phosphorylates only AMP when using GTP as phosphate donor. In vitro, can also catalyze the phosphorylation of CMP, dAMP and dCMP and use GTP as an alternate phosphate donor. Moreover, exhibits a diphosphate kinase activity, producing ATP, CTP, GTP, UTP, TTP, dATP, dCTP and dGTP from the corresponding diphosphate substrates with either ATP or GTP as phosphate donors. Plays a role in controlling cellular ATP levels by regulating phosphorylation and activation of the energy sensor protein kinase AMPK. Plays a protective role in the cellular response to oxidative stress. The protein is Adenylate kinase 4, mitochondrial of Pongo abelii (Sumatran orangutan).